The primary structure comprises 439 residues: tRNA modification GTPase MnmE (439 aa).

(6S)-5-formyl-5,6,7,8-tetrahydrofolate contacts are provided by arginine 20, glutamate 78, and lysine 116. Residues 211–364 (GIYVTILGEP…LLNLIKQKVE (154 aa)) enclose the TrmE-type G domain. Residues 221–226 (NSGKST), 240–246 (SEYAGTT), and 265–268 (DTAG) contribute to the GTP site. Mg(2+) is bound by residues serine 225 and threonine 246. Lysine 439 contributes to the (6S)-5-formyl-5,6,7,8-tetrahydrofolate binding site.

It belongs to the TRAFAC class TrmE-Era-EngA-EngB-Septin-like GTPase superfamily. TrmE GTPase family. In terms of assembly, homodimer. Heterotetramer of two MnmE and two MnmG subunits. K(+) is required as a cofactor.

The protein resides in the cytoplasm. Functionally, exhibits a very high intrinsic GTPase hydrolysis rate. Involved in the addition of a carboxymethylaminomethyl (cmnm) group at the wobble position (U34) of certain tRNAs, forming tRNA-cmnm(5)s(2)U34. In Ehrlichia chaffeensis (strain ATCC CRL-10679 / Arkansas), this protein is tRNA modification GTPase MnmE.